The chain runs to 724 residues: Catalase-peroxidase (724 aa).

The segment at residues Trp98–Tyr226 is a cross-link (tryptophyl-tyrosyl-methioninium (Trp-Tyr) (with M-252)). The Proton acceptor role is filled by His99. The segment at residues Tyr226–Met252 is a cross-link (tryptophyl-tyrosyl-methioninium (Tyr-Met) (with W-98)). His267 serves as a coordination point for heme b.

The protein belongs to the peroxidase family. Peroxidase/catalase subfamily. As to quaternary structure, homodimer or homotetramer. Requires heme b as cofactor. In terms of processing, formation of the three residue Trp-Tyr-Met cross-link is important for the catalase, but not the peroxidase activity of the enzyme.

The catalysed reaction is H2O2 + AH2 = A + 2 H2O. The enzyme catalyses 2 H2O2 = O2 + 2 H2O. Functionally, bifunctional enzyme with both catalase and broad-spectrum peroxidase activity. This chain is Catalase-peroxidase, found in Maricaulis maris (strain MCS10) (Caulobacter maris).